The primary structure comprises 499 residues: Ammonium transporter MEP2 (499 aa).

The Extracellular portion of the chain corresponds to 1–31; the sequence is MSYNFTGTPTGEGTGGNSLTTDLNTQFDLAN. Asn-4 is a glycosylation site (N-linked (GlcNAc...) asparagine). A helical transmembrane segment spans residues 32–52; that stretch reads MGWIGVASAGVWIMVPGIGLL. The Cytoplasmic segment spans residues 53–62; that stretch reads YSGLSRKKHA. The chain crosses the membrane as a helical span at residues 63–83; sequence LSLLWASMMASAVCIFQWFFW. Over 84-122 the chain is Extracellular; the sequence is GYSLAFSHNTRGNGFIGTLEFFGFRNVLGAPSSVSSLPD. Residues 123 to 143 form a helical membrane-spanning segment; it reads ILFAVYQGMFAAVTGALMLGG. Over 144–152 the chain is Cytoplasmic; that stretch reads ACERARLFP. Residues 153–173 traverse the membrane as a helical segment; that stretch reads MMVFLFLWMTIVYCPIACWVW. Residues 174–187 are Extracellular-facing; that stretch reads NAEGWLVKLGSLDY. Residues 188 to 208 traverse the membrane as a helical segment; it reads AGGLCVHLTSGHGGLVYALIL. Residues 209–230 lie on the Cytoplasmic side of the membrane; that stretch reads GKRNDPVTRKGMPKYKPHSVTS. The chain crosses the membrane as a helical span at residues 231–251; sequence VVLGTVFLWFGWMFFNGGSAG. Residues 252–257 are Extracellular-facing; the sequence is NATIRA. The chain crosses the membrane as a helical span at residues 258–278; the sequence is WYSIMSTNLAAACGGLTWMVI. The Cytoplasmic segment spans residues 279–289; sequence DYFRCGRKWTT. The chain crosses the membrane as a helical span at residues 290–312; that stretch reads VGLCSGIIAGLVGITPAAGFVPI. The Extracellular portion of the chain corresponds to 313–315; sequence WSA. A helical membrane pass occupies residues 316-338; sequence VVIGVVTGAGCNLAVDLKSLLRI. Over 339 to 346 the chain is Cytoplasmic; the sequence is DDGLDCYS. The chain crosses the membrane as a helical span at residues 347-367; sequence IHGVGGCIGSVLTGIFAADYV. Residues 368-393 are Extracellular-facing; it reads NATAGSYISPIDGGWINHHYKQVGYQ. The helical transmembrane segment at 394-414 threads the bilayer; it reads LAGICAALAWTVTVTSILLLT. Residues 415 to 499 lie on the Cytoplasmic side of the membrane; sequence MNAIPFLKLR…SSTKNTDHIV (85 aa). Positions 428–441 are enhancer domain; the sequence is DEEELGTDAAQIGE. Residues 442–449 form a linker domain region; that stretch reads FTYEESTA. The segment at 450 to 485 is autoinhibitory domain; the sequence is YIPEPIRSKTSAQMPPPHENIDDKIVGNTDAEKNST. A disordered region spans residues 455–499; the sequence is IRSKTSAQMPPPHENIDDKIVGNTDAEKNSTPSDASSTKNTDHIV. Ser-457 is modified (phosphoserine). The span at 468-482 shows a compositional bias: basic and acidic residues; that stretch reads ENIDDKIVGNTDAEK. The span at 483-493 shows a compositional bias: polar residues; that stretch reads NSTPSDASSTK.

This sequence belongs to the ammonia transporter channel (TC 1.A.11.2) family. Phosphorylated at Ser-457 by the TORC1 effector kinase NPR1 under nitrogen-limiting conditions which causes a conformational change in the C-terminal region (CTR) to form an open active conformation. Supplementation of nitrogen source leads to inactivation and instant Ser-457 dephosphorylation via plasma membrane PSR1 and PSR2 redundant phosphatases. In terms of processing, the residue Asn-4 of the protein's N-terminal tail is the only site that is glycosylated.

The protein resides in the cell membrane. Its function is as follows. Transporter for ammonium (both charged and uncharged NH3 and NH4) to use as a nitrogen source. The affinity of MEP2 is about twenty times higher than that of MEP1. MEP3 has the lowest affinity. Under ammonium limitation acts as an ammonium sensor, generating a signal that leads to pseudohyphal (filamentous) growth. This is Ammonium transporter MEP2 from Saccharomyces cerevisiae (strain ATCC 204508 / S288c) (Baker's yeast).